The primary structure comprises 225 residues: Reticulon-like protein B9 (225 aa).

Positions 39–224 (VADILLWREP…PRGTVKNKKF (186 aa)) constitute a Reticulon domain. A run of 3 helical transmembrane segments spans residues 50 to 70 (IAATLVIGVSILWFLMEVVEY), 72 to 92 (FITLICHASMTSMLFFFIWST), and 152 to 172 (YIVSIIGTYFNFVNLLFIGFV).

It localises to the endoplasmic reticulum membrane. The chain is Reticulon-like protein B9 (RTNLB9) from Arabidopsis thaliana (Mouse-ear cress).